The following is a 132-amino-acid chain: MVMTDPIADMLTRIRNANIARHETVEIPASNMKRAIAMIMLKEGFIKSVEEIDDGKGGILKLTLKYGPNKERVISGLKRISKPGLRVYARHDELPRVLGGLGIAIISTSKGIMTDKEARKAGVGGEVICYIW.

Belongs to the universal ribosomal protein uS8 family. In terms of assembly, part of the 30S ribosomal subunit. Contacts proteins S5 and S12.

Functionally, one of the primary rRNA binding proteins, it binds directly to 16S rRNA central domain where it helps coordinate assembly of the platform of the 30S subunit. In Thermoanaerobacter pseudethanolicus (strain ATCC 33223 / 39E) (Clostridium thermohydrosulfuricum), this protein is Small ribosomal subunit protein uS8.